Reading from the N-terminus, the 332-residue chain is CAX-interacting protein 4 (332 aa).

The interval 33-59 is disordered; it reads GYDPYAPTSKEEPKTTQQKTEDPENSY. Basic and acidic residues predominate over residues 41-54; the sequence is SKEEPKTTQQKTED. The segment at 81–98 adopts a CCHC-type zinc-finger fold; sequence GSCKKCGRVGHLTFQCRN. The span at 124–133 shows a compositional bias: basic and acidic residues; sequence IRRGVGKGEV. The segment at 124–332 is disordered; sequence IRRGVGKGEV…RKRHHRKERE (209 aa). Positions 134-153 are enriched in acidic residues; it reads EEVSSEEEEESESSDSDVDS. Residues 154–163 show a composition bias toward basic and acidic residues; the sequence is EMERIIAERF. Composition is skewed to basic residues over residues 198–214 and 227–236; these read RKRR…HKRR and SKRRKERRGR. Residues 241 to 250 are compositionally biased toward acidic residues; it reads DDSDESEDED. Composition is skewed to basic residues over residues 254-269 and 314-332; these read VKRK…RSRR and SSKR…KERE.

In terms of assembly, interacts with CAX1. As to expression, expressed in leaves, stems and roots, and at lower levels in flowers.

The protein localises to the nucleus. Its function is as follows. May regulate CAX1 cation transporter. This is CAX-interacting protein 4 (CXIP4) from Arabidopsis thaliana (Mouse-ear cress).